We begin with the raw amino-acid sequence, 352 residues long: DNA ADP-ribosyl glycohydrolase (352 aa).

In terms of domain architecture, Macro spans 1-155 (MITYGSGDLL…IYPPSGGSRA (155 aa)). ADP-D-ribose is bound by residues 8-9 (DL), 20-22 (TVN), 31-34 (IALQ), and Thr-79. The active-site Nucleophile is the Lys-80. 117 to 121 (GVGNG) contributes to the ADP-D-ribose binding site. The interval 164–352 (MTWGRAVILE…VALDRILMTA (189 aa)) is interaction with DarT.

Belongs to the DarG ADP-ribosyl glycohydrolase family. Interacts (via C-terminus) with cognate toxin DarT; this heterodimeric complex neutralizes the toxic effect of DarT by preventing ssDNA binding to DarT and consequently inactivating the toxin by direct protein-protein interactions.

The enzyme catalyses an N-(ADP-alpha-D-ribosyl)-thymidine in DNA + H2O = a thymidine in DNA + ADP-D-ribose. Antitoxin component of the hybrid type II/IV toxin-antitoxin (TA) system DarTG, which plays a crucial role in controlling bacterial growth and bacteriophage infection. De-ADP-ribosylates DNA (probably) modified on thymidine by its cognate toxin DarT, which neutralizes the activity of cognate toxin DarT. The polypeptide is DNA ADP-ribosyl glycohydrolase (Mycobacterium bovis (strain BCG / Pasteur 1173P2)).